The primary structure comprises 819 residues: Protein EFR3 homolog A (819 aa).

A phosphoserine mark is found at serine 360, serine 363, serine 420, and serine 692.

It belongs to the EFR3 family. Component of a phosphatidylinositol 4-kinase (PI4K) complex, composed of PI4KA, EFR3 (EFR3A or EFR3B), TTC7 (TTC7A or TTC7B) and HYCC (HYCC1 or HYCC2). Palmitoylated at its N-terminus, anchoring the protein to the plasma membrane. Widely expressed. Expressed in neurons of the superior olivary complex of the auditory brainstem. Also expressed at lower levels in the cochlear nucleus, the lateral leminiscal nuclei and the inferior collicus.

It is found in the cell membrane. Its subcellular location is the cytoplasm. The protein localises to the cytosol. In terms of biological role, component of a complex required to localize phosphatidylinositol 4-kinase (PI4K) to the plasma membrane. The complex acts as a regulator of phosphatidylinositol 4-phosphate (PtdIns(4)P) synthesis. In the complex, EFR3A probably acts as the membrane-anchoring component. Also involved in responsiveness to G-protein-coupled receptors; it is however unclear whether this role is direct or indirect. This is Protein EFR3 homolog A from Mus musculus (Mouse).